We begin with the raw amino-acid sequence, 176 residues long: 3-hydroxyanthranilate 3,4-dioxygenase (176 aa).

Arginine 44 contributes to the O2 binding site. Residues histidine 48, glutamate 54, and histidine 92 each coordinate Fe cation. Position 54 (glutamate 54) interacts with substrate. Substrate is bound by residues arginine 96 and glutamate 106. Residues cysteine 121, cysteine 124, cysteine 158, and cysteine 161 each contribute to the Fe cation site.

It belongs to the 3-HAO family. Homodimer. Requires Fe(2+) as cofactor.

It carries out the reaction 3-hydroxyanthranilate + O2 = (2Z,4Z)-2-amino-3-carboxymuconate 6-semialdehyde. It participates in cofactor biosynthesis; NAD(+) biosynthesis; quinolinate from L-kynurenine: step 3/3. Catalyzes the oxidative ring opening of 3-hydroxyanthranilate to 2-amino-3-carboxymuconate semialdehyde, which spontaneously cyclizes to quinolinate. The polypeptide is 3-hydroxyanthranilate 3,4-dioxygenase (Xanthomonas campestris pv. campestris (strain 8004)).